The following is a 242-amino-acid chain: Lactate utilization protein A 2 (242 aa).

The protein belongs to the LutA/YkgE family.

Its function is as follows. Is involved in L-lactate degradation and allows cells to grow with lactate as the sole carbon source. The protein is Lactate utilization protein A 2 of Bacillus cereus (strain Q1).